Here is a 122-residue protein sequence, read N- to C-terminus: Acidic phospholipase A2 Tpu-E6c (122 aa).

7 disulfide bridges follow: C26–C115, C28–C44, C43–C95, C49–C122, C50–C88, C57–C81, and C75–C86. Residues Y27, G29, and G31 each contribute to the Ca(2+) site. H47 is an active-site residue. D48 contributes to the Ca(2+) binding site. D89 is an active-site residue.

Monomer. The cofactor is Ca(2+). Expressed by the venom gland.

The protein localises to the secreted. The enzyme catalyses a 1,2-diacyl-sn-glycero-3-phosphocholine + H2O = a 1-acyl-sn-glycero-3-phosphocholine + a fatty acid + H(+). Its function is as follows. Snake venom phospholipase A2 (PLA2) that impairs hemostasis. It weakly inhibits ADP-induced platelet aggregation when tested on platelet rich plasma from human and rabbit blood (15-25% of inhibition at 5-10 ug of enzyme), and dose-dependently inhibits blood coagulation, possibly by inhibiting thrombin activation. Exhibits high hydrolytic activities toward L-dipalmitoyl phosphatidylcholine. PLA2 catalyzes the calcium-dependent hydrolysis of the 2-acyl groups in 3-sn-phosphoglycerides. The chain is Acidic phospholipase A2 Tpu-E6c from Craspedocephalus puniceus (Flat-nosed pitviper).